Reading from the N-terminus, the 454-residue chain is Allantoinase (454 aa).

Positions 60, 62, 147, 183, 239, and 312 each coordinate Zn(2+). Position 147 is an N6-carboxylysine (Lys147).

The protein belongs to the metallo-dependent hydrolases superfamily. Allantoinase family. In terms of assembly, homotetramer. Requires Zn(2+) as cofactor. Carboxylation allows a single lysine to coordinate two zinc ions.

It catalyses the reaction (S)-allantoin + H2O = allantoate + H(+). Its pathway is nitrogen metabolism; (S)-allantoin degradation; allantoate from (S)-allantoin: step 1/1. In terms of biological role, catalyzes the conversion of allantoin (5-ureidohydantoin) to allantoic acid by hydrolytic cleavage of the five-member hydantoin ring. This is Allantoinase from Rubrobacter xylanophilus (strain DSM 9941 / JCM 11954 / NBRC 16129 / PRD-1).